A 297-amino-acid chain; its full sequence is Cell division protein ZipA (297 aa).

Methionine 1 is a topological domain (periplasmic). The helical transmembrane segment at 2–22 (EIGLREWLILIGIIVIAGILF) threads the bilayer. The Cytoplasmic segment spans residues 23–297 (DGWRRMRGGK…FERRALTQKR (275 aa)). Positions 48–150 (DEEGGSAEVL…GAAPASSSVK (103 aa)) are disordered. Positions 83-92 (ARDREREPKP) are enriched in basic and acidic residues. Residues 124–133 (LFADSDDDFA) show a composition bias toward acidic residues. Residues 136–149 (NNRSSGAAPASSSV) are compositionally biased toward polar residues.

Belongs to the ZipA family. In terms of assembly, interacts with FtsZ via their C-terminal domains.

The protein resides in the cell inner membrane. In terms of biological role, essential cell division protein that stabilizes the FtsZ protofilaments by cross-linking them and that serves as a cytoplasmic membrane anchor for the Z ring. Also required for the recruitment to the septal ring of downstream cell division proteins. The sequence is that of Cell division protein ZipA from Pseudomonas putida (strain ATCC 700007 / DSM 6899 / JCM 31910 / BCRC 17059 / LMG 24140 / F1).